A 180-amino-acid chain; its full sequence is Large ribosomal subunit protein uL15 (180 aa).

The tract at residues 1-62 (MKKERLEQAA…KTAGRGSKGQ (62 aa)) is disordered. Residues 35 to 44 (GAKKEKKRVG) show a composition bias toward basic residues.

Belongs to the universal ribosomal protein uL15 family. In terms of assembly, part of the 50S ribosomal subunit.

Binds to the 23S rRNA. This chain is Large ribosomal subunit protein uL15, found in Leptospira borgpetersenii serovar Hardjo-bovis (strain JB197).